The following is a 442-amino-acid chain: Citrate transporter CitP (442 aa).

13 helical membrane-spanning segments follow: residues 27–47 (ISGIGLIAYAFMAVLLIIAIS), 59–79 (IFALVLMGHVFYYLGAHLPIF), 83–103 (LGGGSVFTILLTAILVATNVI), 114–134 (FINGMDFLGLYIVSLIASSLF), 151–171 (VAFISMALTAVVIGIVGVIIG), 177–197 (AILYIAMPIMAGGVGAGIVPL), 209–229 (SAGILSKLFPTVILGNLLAII), 267–287 (YVQLGVGLIIAVMFFMIGTML), 293–313 (GINAYAFIILSIVLTKAFGLL), 321–341 (VIMFGQVIVKNMTHALLAGVG), 349–369 (VLLAALSWQFVVLCLVSIVAI), 387–409 (AAITAGLANNSMGGTGNVAVLAA), and 421–441 (MGNRIGGALILVVAGILVTFM).

It belongs to the 2-hydroxycarboxylate transporter (2-HCT) (TC 2.A.24) family.

It is found in the cell membrane. The catalysed reaction is (R)-lactate(in) + citrate(out) = (R)-lactate(out) + citrate(in). The enzyme catalyses (S)-lactate(in) + citrate(out) = (S)-lactate(out) + citrate(in). It carries out the reaction citrate(in) + H(+)(in) = citrate(out) + H(+)(out). With respect to regulation, the transport of citrate is unaffected by the presence of citrate in the growth media. Secondary transporter involved in citrate metabolism. During cometabolism of citrate and glucose, catalyzes the uptake of divalent citrate into the cell coupled to the exit of monovalent lactate, the end product of glycolysis in L.lactis. The citrate/lactate exchange is electrogenic and results in the generation of a membrane potential. Plays an important role in resistance against lactate toxicity at low pH. In the absence of glucose, i.e. when no lactate is produced, CitP catalyzes the uptake of citrate in exchange with the citrate metabolism intermediates pyruvate and alpha-acetolactate, and the end product acetate. In the absence of glucose, CitP can also catalyze the proton-dependent transport of citrate. In vitro, shows a broad substrate specificity. Can transport a wide variety of mono- and dicarboxylates of the form X-CR(2)-COO(-), where X represents OH (2-hydroxy acid), O (2-keto acid), or H (acid) and R groups differ in size, hydrophobicity and composition. Many of the substrates are intermediates or products of amino acid metabolism, suggesting that CitP may have a broader physiological function than its role in citrate metabolism. This Lactococcus lactis subsp. lactis (Streptococcus lactis) protein is Citrate transporter CitP.